Here is a 347-residue protein sequence, read N- to C-terminus: NADH-ubiquinone oxidoreductase chain 2 (347 aa).

10 helical membrane passes run 3-23 (PPIL…VLTS), 25-45 (HWLT…PILM), 60-80 (LLTQ…NLMF), 96-116 (AMVT…FWVP), 149-169 (IDPN…GWGG), 178-198 (ILAY…LYNP), 200-220 (MMLL…MLFM), 237-257 (APLI…LPPL), 274-294 (EMII…YFYM), and 323-343 (MILL…TPLL).

The protein belongs to the complex I subunit 2 family. In terms of assembly, core subunit of respiratory chain NADH dehydrogenase (Complex I) which is composed of 45 different subunits. Interacts with TMEM242.

The protein localises to the mitochondrion inner membrane. It catalyses the reaction a ubiquinone + NADH + 5 H(+)(in) = a ubiquinol + NAD(+) + 4 H(+)(out). In terms of biological role, core subunit of the mitochondrial membrane respiratory chain NADH dehydrogenase (Complex I) which catalyzes electron transfer from NADH through the respiratory chain, using ubiquinone as an electron acceptor. Essential for the catalytic activity and assembly of complex I. The sequence is that of NADH-ubiquinone oxidoreductase chain 2 from Mungos mungo (Banded mongoose).